Here is a 1349-residue protein sequence, read N- to C-terminus: Serine-aspartate repeat-containing protein D (1349 aa).

An N-terminal signal peptide occupies residues 1 to 35 (MLNRENKTAITRKGMVSNRLNKFSIRKYTVGTASI). A YSIRK-G/S signaling motif motif is present at residues 23–34 (FSIRKYTVGTAS). The ligand binding A region stretch occupies residues 36–568 (LVGTTLIFGL…NNQSGGAGQE (533 aa)). Residues 54–185 (ESTNKELNEA…NKKVDAKTES (132 aa)) form a disordered region. Composition is skewed to polar residues over residues 62 to 71 (EATTSASDNQ) and 94 to 108 (EMVSSQGNETTSNGN). Residues 130 to 145 (KSDEQASPKSTNEDLN) show a composition bias toward basic and acidic residues. Composition is skewed to polar residues over residues 146–155 (TKQTISNQEA) and 163–173 (NKSVVNVQPTN). Positions 174–183 (EENKKVDAKT) are enriched in basic and acidic residues. CNA-B domains follow at residues 569-680 (VYKI…IYKP), 681-791 (KYNL…YKTP), 792-901 (KYNL…FYKP), 902-1012 (TYNL…YKTP), and 1013-1123 (KYSL…EEDT). 3 disordered regions span residues 856–883 (FETPSGYTPTQVGSGTDEGIDSNGTSTT), 972–992 (YTPTSVTSGNDTEKDSNGLTT), and 1081–1325 (AGLT…SNNA). 2 stretches are compositionally biased toward polar residues: residues 860-869 (SGYTPTQVGS) and 972-981 (YTPTSVTSGN). 2 stretches are compositionally biased toward acidic residues: residues 1091 to 1101 (TEDDKDADGGE) and 1118 to 1288 (YFEE…DSDS). The short motif at 1312 to 1316 (LPETG) is the LPXTG sorting signal element. Pentaglycyl murein peptidoglycan amidated threonine is present on T1315. Positions 1316-1349 (GSENNGSNNATLFGGLFAALGSLLLFGRRKKQNK) are cleaved as a propeptide — removed by sortase.

It belongs to the serine-aspartate repeat-containing protein (SDr) family. As to quaternary structure, interacts with host DSG1; this interaction increases S.aureus adherence to keratinocytes.

The protein localises to the secreted. It localises to the cell wall. Its function is as follows. Cell surface-associated calcium-binding protein which plays an important role in adhesion and pathogenesis. Mediates interactions with components of the extracellular matrix such as host DSG1 to promote bacterial adhesion to host cells. Contributes to the resistance to killing by innate immune components such as neutrophils present in blood and thus attenuates bacterial clearance. The chain is Serine-aspartate repeat-containing protein D (sdrD) from Staphylococcus aureus (strain NCTC 8325 / PS 47).